The sequence spans 258 residues: Snake venom serine protease 2 (258 aa).

Residues 1–18 (MVLIRVLANLLILQLSYA) form the signal peptide. The propeptide occupies 19–24 (QKSSEL). The Peptidase S1 domain occupies 25-249 (VFGGRPCNIN…YNDWVQSIIA (225 aa)). Cystine bridges form between cysteine 31-cysteine 163, cysteine 50-cysteine 66, cysteine 98-cysteine 256, cysteine 142-cysteine 210, cysteine 174-cysteine 189, and cysteine 200-cysteine 225. N-linked (GlcNAc...) asparagine glycosylation occurs at asparagine 44. Active-site charge relay system residues include histidine 65 and aspartate 110. N-linked (GlcNAc...) asparagine glycans are attached at residues asparagine 122 and asparagine 185. The active-site Charge relay system is serine 204.

The protein belongs to the peptidase S1 family. Snake venom subfamily. Monomer. In terms of tissue distribution, expressed by the venom gland.

The protein localises to the secreted. Inhibited by PMSF at 2 mM concentration but not by EDTA. Snake venom serine protease that may act in the hemostasis system of the prey. Has weak fibrinogen clotting activity. Possesses amidolysis activity towards S-2251 (substrate for plasmin) but has no hydrolytic activity with S-2302 (plasma kallikrein substrate) or S-2238 (thrombin substrate). This chain is Snake venom serine protease 2, found in Protobothrops jerdonii (Jerdon's pitviper).